Consider the following 164-residue polypeptide: Endoribonuclease YbeY (164 aa).

Zn(2+)-binding residues include H114, H118, and H124.

The protein belongs to the endoribonuclease YbeY family. Zn(2+) serves as cofactor.

The protein localises to the cytoplasm. Functionally, single strand-specific metallo-endoribonuclease involved in late-stage 70S ribosome quality control and in maturation of the 3' terminus of the 16S rRNA. The protein is Endoribonuclease YbeY of Mycoplasmoides gallisepticum (strain R(low / passage 15 / clone 2)) (Mycoplasma gallisepticum).